A 954-amino-acid chain; its full sequence is Glycine dehydrogenase (decarboxylating) (954 aa).

Residue Lys702 is modified to N6-(pyridoxal phosphate)lysine.

The protein belongs to the GcvP family. As to quaternary structure, the glycine cleavage system is composed of four proteins: P, T, L and H. It depends on pyridoxal 5'-phosphate as a cofactor.

The enzyme catalyses N(6)-[(R)-lipoyl]-L-lysyl-[glycine-cleavage complex H protein] + glycine + H(+) = N(6)-[(R)-S(8)-aminomethyldihydrolipoyl]-L-lysyl-[glycine-cleavage complex H protein] + CO2. The glycine cleavage system catalyzes the degradation of glycine. The P protein binds the alpha-amino group of glycine through its pyridoxal phosphate cofactor; CO(2) is released and the remaining methylamine moiety is then transferred to the lipoamide cofactor of the H protein. This is Glycine dehydrogenase (decarboxylating) from Xanthomonas euvesicatoria pv. vesicatoria (strain 85-10) (Xanthomonas campestris pv. vesicatoria).